A 461-amino-acid chain; its full sequence is Glycine--tRNA ligase (461 aa).

2 residues coordinate substrate: arginine 100 and glutamate 174. ATP is bound by residues arginine 206–glutamate 208, phenylalanine 216–phenylalanine 221, glutamate 290–leucine 291, and glycine 334–arginine 337. Phenylalanine 221–glutamate 225 is a binding site for substrate. Position 330 to 334 (glutamate 330 to glycine 334) interacts with substrate.

This sequence belongs to the class-II aminoacyl-tRNA synthetase family. As to quaternary structure, homodimer.

It is found in the cytoplasm. The catalysed reaction is tRNA(Gly) + glycine + ATP = glycyl-tRNA(Gly) + AMP + diphosphate. Its function is as follows. Catalyzes the attachment of glycine to tRNA(Gly). The polypeptide is Glycine--tRNA ligase (Caldanaerobacter subterraneus subsp. tengcongensis (strain DSM 15242 / JCM 11007 / NBRC 100824 / MB4) (Thermoanaerobacter tengcongensis)).